The primary structure comprises 479 residues: Odorant receptor coreceptor (479 aa).

At 1 to 43 the chain is on the cytoplasmic side; that stretch reads MHVQPTKYHGLVLDLMPNIRLMQGFGHFLFRYVSGPVLIRKLY. A helical membrane pass occupies residues 44-64; that stretch reads SWWNLIMILLQYFAIMGNLVM. The Extracellular segment spans residues 65–73; the sequence is NTGDVNELT. The helical transmembrane segment at 74 to 94 threads the bilayer; it reads ANTITTLFFTHSVTKFIYVAV. The Cytoplasmic portion of the chain corresponds to 95 to 133; it reads NSEHFYRTLGIWNQPNSHSLFAESDARYHSIALAKMRKL. A helical membrane pass occupies residues 134–154; it reads LVMVMVTTVLSVVAWITITFF. Residues 155-187 lie on the Extracellular side of the membrane; it reads GDSVKNVFDKETNETYTVEIPRLPIKALYPWDA. N-linked (GlcNAc...) asparagine glycosylation occurs at Asn167. The chain crosses the membrane as a helical span at residues 188–208; the sequence is MSGVPYFFSFVYQAYFLLFSM. Residues 209–344 are Cytoplasmic-facing; sequence CQANLADVMF…VERHKHVVRL (136 aa). Residues 345–365 form a helical membrane-spanning segment; it reads VSAIGETYGAALLLHMLTSTI. The Extracellular segment spans residues 366-383; the sequence is KLTLLAYQATKIDALNVY. The helical transmembrane segment at 384 to 404 threads the bilayer; the sequence is GLTVIGYLVYALAQVFLFCIF. Topologically, residues 405–455 are cytoplasmic; it reads GNRLIEESSSVMEAAYSCHWYDGSEEAKTFVQIVCQQCQKAMTISGAKFFT. Residues 456–476 form a helical membrane-spanning segment; it reads VSLDLFASVLGAVVTYFMVLV. Topologically, residues 477–479 are extracellular; sequence QLK.

Belongs to the insect chemoreceptor superfamily. Heteromeric odorant receptor channel (TC 1.A.69) family. Orco subfamily. Heterodimer with conventional odorant receptors (ORs). As to expression, expressed in female antenna, maxillary palp and proboscis. Not detected in male tissues.

The protein localises to the cell membrane. Odorant coreceptor which complexes with conventional odorant receptors (ORs) to form odorant-sensing units, providing sensitive and prolonged odorant signaling and calcium permeability. Orco is a universal and integral part of the functional odorant receptor, involved in the dendritic localization of other olfactory receptors. Required for detecting a host for blood feeding. Plays a key role in preferred attraction of females for humans over non-human hosts for blood feeding. The protein is Odorant receptor coreceptor of Aedes albopictus (Asian tiger mosquito).